Here is a 740-residue protein sequence, read N- to C-terminus: Alpha-1,6-mannosylglycoprotein 6-beta-N-acetylglucosaminyltransferase A (740 aa).

The Cytoplasmic segment spans residues 1-13 (MAFFSPWKLSSQK). The helical; Signal-anchor for type II membrane protein transmembrane segment at 14 to 30 (LGFFLVTFGFIWGMMLL) threads the bilayer. The Lumenal segment spans residues 31 to 740 (HFTIQQRTQP…GQVALCKDCL (710 aa)). N-linked (GlcNAc...) asparagine glycosylation is found at Asn109, Asn114, and Asn117. Disulfide bonds link Cys144–Cys182, Cys155–Cys195, Cys171–Cys337, Cys371–Cys625, Cys648–Cys723, Cys652–Cys725, Cys659–Cys712, Cys680–Cys701, and Cys736–Cys739. Positions 212 to 740 (NSLAEIRTDF…GQVALCKDCL (529 aa)) are sufficient for catalytic activity. Asn333 is a glycosylation site (N-linked (GlcNAc...) asparagine). Residue 377 to 378 (DS) coordinates substrate. N-linked (GlcNAc...) asparagine glycosylation is found at Asn432 and Asn446. Glu525 is a UDP-N-acetyl-alpha-D-glucosamine binding site. Residue Lys553 participates in substrate binding.

This sequence belongs to the glycosyltransferase 18 family. Post-translationally, N-glycosylated. In terms of processing, a secreted form is released from the membrane after cleavage by gamma-secretase. As to expression, detected in kidney (at protein level). Detected in kidney.

It is found in the golgi apparatus membrane. It localises to the secreted. It catalyses the reaction N(4)-{beta-D-GlcNAc-(1-&gt;2)-[beta-D-GlcNAc-(1-&gt;4)]-alpha-D-Man-(1-&gt;3)-[beta-D-GlcNAc-(1-&gt;2)-alpha-D-Man-(1-&gt;6)]-beta-D-Man-(1-&gt;4)-beta-D-GlcNAc-(1-&gt;4)-beta-D-GlcNAc}-L-asparaginyl-[protein] + UDP-N-acetyl-alpha-D-glucosamine = N(4)-{beta-D-GlcNAc-(1-&gt;2)-[beta-D-GlcNAc-(1-&gt;4)]-alpha-D-Man-(1-&gt;3)-[beta-D-GlcNAc-(1-&gt;2)-[beta-D-GlcNAc-(1-&gt;6)]-alpha-D-Man-(1-&gt;6)]-beta-D-Man-(1-&gt;4)-beta-D-GlcNAc-(1-&gt;4)-beta-D-GlcNAc}-L-asparaginyl-[protein] + UDP + H(+). It participates in protein modification; protein glycosylation. Catalyzes the addition of N-acetylglucosamine (GlcNAc) in beta 1-6 linkage to the alpha-linked mannose of biantennary N-linked oligosaccharides. Catalyzes an important step in the biosynthesis of branched, complex-type N-glycans, such as those found on EGFR, TGFR (TGF-beta receptor) and CDH2. Via its role in the biosynthesis of complex N-glycans, plays an important role in the activation of cellular signaling pathways, reorganization of the actin cytoskeleton, cell-cell adhesion and cell migration. MGAT5-dependent EGFR N-glycosylation enhances the interaction between EGFR and LGALS3 and thereby prevents rapid EGFR endocytosis and prolongs EGFR signaling. Required for efficient interaction between TGFB1 and its receptor. Enhances activation of intracellular signaling pathways by several types of growth factors, including FGF2, PDGF, IGF, TGFB1 and EGF. MGAT5-dependent CDH2 N-glycosylation inhibits CDH2-mediated homotypic cell-cell adhesion and contributes to the regulation of downstream signaling pathways. Promotes cell migration. Contributes to the regulation of the inflammatory response. MGAT5-dependent TCR N-glycosylation enhances the interaction between TCR and LGALS3, limits agonist-induced TCR clustering, and thereby dampens TCR-mediated responses to antigens. Required for normal leukocyte evasation and accumulation at sites of inflammation. Inhibits attachment of monocytes to the vascular endothelium and subsequent monocyte diapedesis. Functionally, promotes proliferation of umbilical vein endothelial cells and angiogenesis, at least in part by promoting the release of the growth factor FGF2 from the extracellular matrix. The chain is Alpha-1,6-mannosylglycoprotein 6-beta-N-acetylglucosaminyltransferase A (Mgat5) from Rattus norvegicus (Rat).